A 185-amino-acid polypeptide reads, in one-letter code: Crossover junction endodeoxyribonuclease RuvC (185 aa).

Catalysis depends on residues Asp16, Glu75, and Asp147. The Mg(2+) site is built by Asp16, Glu75, and Asp147.

The protein belongs to the RuvC family. In terms of assembly, homodimer which binds Holliday junction (HJ) DNA. The HJ becomes 2-fold symmetrical on binding to RuvC with unstacked arms; it has a different conformation from HJ DNA in complex with RuvA. In the full resolvosome a probable DNA-RuvA(4)-RuvB(12)-RuvC(2) complex forms which resolves the HJ. Requires Mg(2+) as cofactor.

It is found in the cytoplasm. It carries out the reaction Endonucleolytic cleavage at a junction such as a reciprocal single-stranded crossover between two homologous DNA duplexes (Holliday junction).. Its function is as follows. The RuvA-RuvB-RuvC complex processes Holliday junction (HJ) DNA during genetic recombination and DNA repair. Endonuclease that resolves HJ intermediates. Cleaves cruciform DNA by making single-stranded nicks across the HJ at symmetrical positions within the homologous arms, yielding a 5'-phosphate and a 3'-hydroxyl group; requires a central core of homology in the junction. The consensus cleavage sequence is 5'-(A/T)TT(C/G)-3'. Cleavage occurs on the 3'-side of the TT dinucleotide at the point of strand exchange. HJ branch migration catalyzed by RuvA-RuvB allows RuvC to scan DNA until it finds its consensus sequence, where it cleaves and resolves the cruciform DNA. The sequence is that of Crossover junction endodeoxyribonuclease RuvC from Aromatoleum aromaticum (strain DSM 19018 / LMG 30748 / EbN1) (Azoarcus sp. (strain EbN1)).